The sequence spans 141 residues: Nucleoside diphosphate kinase (141 aa).

Positions 9, 57, 85, 91, 102, and 112 each coordinate ATP. Residue His-115 is the Pros-phosphohistidine intermediate of the active site.

The protein belongs to the NDK family. In terms of assembly, homotetramer. It depends on Mg(2+) as a cofactor.

It is found in the cytoplasm. It catalyses the reaction a 2'-deoxyribonucleoside 5'-diphosphate + ATP = a 2'-deoxyribonucleoside 5'-triphosphate + ADP. The catalysed reaction is a ribonucleoside 5'-diphosphate + ATP = a ribonucleoside 5'-triphosphate + ADP. Its function is as follows. Major role in the synthesis of nucleoside triphosphates other than ATP. The ATP gamma phosphate is transferred to the NDP beta phosphate via a ping-pong mechanism, using a phosphorylated active-site intermediate. The protein is Nucleoside diphosphate kinase of Prosthecochloris aestuarii (strain DSM 271 / SK 413).